Reading from the N-terminus, the 231-residue chain is MLKLQEKLKNDYGLVFNDEDLLKTAFTHSSFTNEERLPKIANNERLEFLGDVALSLVISDYLYRTYPEKLEGELSKMRSSIVRTESLANFSRSCGFGEFLRLGHGEEKMGGRDRETTLENLFEAFLGALFIDQGMDEVRKFIQHVVIPHVKNDDYVKVIDYKTELQEVLQVGGETTITYNILKEEGPAHDRSFVAAVYNNGKELGRGLGKSKKVAEQKAAENAIKGQNHVS.

One can recognise an RNase III domain in the interval Gln-5–Gly-134. Mg(2+) is bound at residue Glu-47. Residue Asp-51 is part of the active site. Residues Asn-120 and Glu-123 each coordinate Mg(2+). Glu-123 is an active-site residue. The DRBM domain occupies Asp-160–His-229.

Belongs to the ribonuclease III family. As to quaternary structure, homodimer. Requires Mg(2+) as cofactor.

The protein localises to the cytoplasm. It catalyses the reaction Endonucleolytic cleavage to 5'-phosphomonoester.. Digests double-stranded RNA. Involved in the processing of primary rRNA transcript to yield the immediate precursors to the large and small rRNAs (23S and 16S). Processes some mRNAs, and tRNAs when they are encoded in the rRNA operon. Processes pre-crRNA and tracrRNA of type II CRISPR loci if present in the organism. The chain is Ribonuclease 3 from Lactococcus lactis subsp. cremoris (strain SK11).